The sequence spans 156 residues: Transcription antitermination protein NusB (156 aa).

Belongs to the NusB family.

Its function is as follows. Involved in transcription antitermination. Required for transcription of ribosomal RNA (rRNA) genes. Binds specifically to the boxA antiterminator sequence of the ribosomal RNA (rrn) operons. This chain is Transcription antitermination protein NusB, found in Rickettsia massiliae (strain Mtu5).